A 174-amino-acid polypeptide reads, in one-letter code: Shikimate kinase (174 aa).

15–20 (GTGKST) provides a ligand contact to ATP. Position 19 (serine 19) interacts with Mg(2+). The substrate site is built by aspartate 37, arginine 61, and glycine 82. Arginine 120 serves as a coordination point for ATP. Arginine 138 contributes to the substrate binding site.

The protein belongs to the shikimate kinase family. Monomer. Mg(2+) is required as a cofactor.

The protein resides in the cytoplasm. It carries out the reaction shikimate + ATP = 3-phosphoshikimate + ADP + H(+). It functions in the pathway metabolic intermediate biosynthesis; chorismate biosynthesis; chorismate from D-erythrose 4-phosphate and phosphoenolpyruvate: step 5/7. Functionally, catalyzes the specific phosphorylation of the 3-hydroxyl group of shikimic acid using ATP as a cosubstrate. The chain is Shikimate kinase from Staphylococcus aureus (strain MRSA252).